A 165-amino-acid polypeptide reads, in one-letter code: Deoxyuridine 5'-triphosphate nucleotidohydrolase (165 aa).

Belongs to the dUTPase family. In terms of assembly, homotrimer. Mg(2+) is required as a cofactor.

It localises to the host cytoplasm. The protein resides in the virion. It carries out the reaction dUTP + H2O = dUMP + diphosphate + H(+). The viral dUTPase may play a role in lowering the dUTP concentration in natural infections to minimize misincorporation of deoxyuridine into the viral DNA and ensure the fidelity of genome replication. The protein is Deoxyuridine 5'-triphosphate nucleotidohydrolase of Ornithodoros (relapsing fever ticks).